The following is a 74-amino-acid chain: Translation initiation factor IF-1 2 (74 aa).

In terms of domain architecture, S1-like spans 1-73 (MTKNKNVIEV…TRGRIVFRYR (73 aa)).

It belongs to the IF-1 family. Component of the 30S ribosomal translation pre-initiation complex which assembles on the 30S ribosome in the order IF-2 and IF-3, IF-1 and N-formylmethionyl-tRNA(fMet); mRNA recruitment can occur at any time during PIC assembly.

Its subcellular location is the cytoplasm. One of the essential components for the initiation of protein synthesis. Stabilizes the binding of IF-2 and IF-3 on the 30S subunit to which N-formylmethionyl-tRNA(fMet) subsequently binds. Helps modulate mRNA selection, yielding the 30S pre-initiation complex (PIC). Upon addition of the 50S ribosomal subunit IF-1, IF-2 and IF-3 are released leaving the mature 70S translation initiation complex. This chain is Translation initiation factor IF-1 2, found in Streptomyces avermitilis (strain ATCC 31267 / DSM 46492 / JCM 5070 / NBRC 14893 / NCIMB 12804 / NRRL 8165 / MA-4680).